Consider the following 608-residue polypeptide: Prolactin receptor (608 aa).

The N-terminal stretch at 1-19 (MSSALAYMLLVLSISLLNG) is a signal peptide. Topologically, residues 20-229 (QSPPGKPEIH…EIPNDFTLKD (210 aa)) are extracellular. Fibronectin type-III domains follow at residues 22–122 (PPGK…IVEP) and 124–224 (PPRN…IPND). Cysteines 31 and 41 form a disulfide. Asparagine 54 is a glycosylation site (N-linked (GlcNAc...) asparagine). Cysteine 70 and cysteine 81 are joined by a disulfide. 2 N-linked (GlcNAc...) asparagine glycosylation sites follow: asparagine 99 and asparagine 127. Zn(2+) is bound by residues aspartate 206 and histidine 207. A WSXWS motif motif is present at residues 210 to 214 (WSRWG). The chain crosses the membrane as a helical span at residues 230-253 (TTVWIIVAVLSAVICLIMVWAVAL). The Cytoplasmic portion of the chain corresponds to 254 to 608 (KGYSMMTCIF…DPTCFMHSFH (355 aa)). Positions 262–270 (IFPPVPGPK) match the Box 1 motif motif. Disordered regions lie at residues 317 to 355 (DERL…HSLL), 377 to 419 (KPEN…TRRS), and 466 to 487 (GAKS…EKGP). Basic and acidic residues predominate over residues 318–327 (ERLMPSHSKE). Residues 345–354 (GHGSYDSHSL) are compositionally biased toward low complexity. Polar residues predominate over residues 398–408 (CHTDTSKSTTW).

The protein belongs to the type I cytokine receptor family. Type 1 subfamily. As to quaternary structure, interacts with SMARCA1. Interacts with NEK3 and VAV2 and this interaction is prolactin-dependent.

It is found in the membrane. Its function is as follows. This is a receptor for the anterior pituitary hormone prolactin. The sequence is that of Prolactin receptor (Prlr) from Mus musculus (Mouse).